Here is a 566-residue protein sequence, read N- to C-terminus: Membrane protein insertase YidC (566 aa).

A helical membrane pass occupies residues 6–26 (NLLLLALLFVSFLLYTAWVEE). The tract at residues 30–80 (QVAPQVQTEQVDSSVPASVASSANSANLSDGVPNSPQQSSTDATSTELPAS) is disordered. The segment covering 31–41 (VAPQVQTEQVD) has biased composition (polar residues). The span at 42–58 (SSVPASVASSANSANLS) shows a compositional bias: low complexity. Residues 61 to 80 (VPNSPQQSSTDATSTELPAS) are compositionally biased toward polar residues. The next 4 helical transmembrane spans lie at 356 to 376 (LLLFFQGIVGNWGVAIILITF), 433 to 453 (LGGCFPILLQMPIFIALYWSL), 471 to 491 (LSVQDPYYILPILMGVSMFFI), and 510 to 530 (FMPVIFTFFFLWFPAGLVLYW).

This sequence belongs to the OXA1/ALB3/YidC family. Type 1 subfamily. Interacts with the Sec translocase complex via SecD. Specifically interacts with transmembrane segments of nascent integral membrane proteins during membrane integration.

It is found in the cell inner membrane. Its function is as follows. Required for the insertion and/or proper folding and/or complex formation of integral membrane proteins into the membrane. Involved in integration of membrane proteins that insert both dependently and independently of the Sec translocase complex, as well as at least some lipoproteins. Aids folding of multispanning membrane proteins. In Psychromonas ingrahamii (strain DSM 17664 / CCUG 51855 / 37), this protein is Membrane protein insertase YidC.